The sequence spans 238 residues: MRTNGRGPRDLRNVVLEPGVSKHAEGSCLARFGDTHVLCTASVDEKVPPHVYGTGAGWVTAEYGMLPRSTHERMAREAARGKQGGRTLEIQRLIGRALRAAVDLRALGTRTVTLDCDVIQADGGTRTAAITGGYVALALALRGLQQRKTLSRNPLARSVAAVSVGLVEGEVCVDLDYGEDSTAEVDMNVVATGDGALVEVQGTAEGKPFPRSDLDRMVDAALEAIGRLKERQEQALRG.

Residues Arg-86 and 124–126 (GTR) contribute to the phosphate site.

It belongs to the RNase PH family. Homohexameric ring arranged as a trimer of dimers.

The catalysed reaction is tRNA(n+1) + phosphate = tRNA(n) + a ribonucleoside 5'-diphosphate. In terms of biological role, phosphorolytic 3'-5' exoribonuclease that plays an important role in tRNA 3'-end maturation. Removes nucleotide residues following the 3'-CCA terminus of tRNAs; can also add nucleotides to the ends of RNA molecules by using nucleoside diphosphates as substrates, but this may not be physiologically important. Probably plays a role in initiation of 16S rRNA degradation (leading to ribosome degradation) during starvation. The polypeptide is Ribonuclease PH (Anaeromyxobacter sp. (strain Fw109-5)).